The following is an 863-amino-acid chain: MVVVMLAAEEPLASTPRRDMDCVGKANTNKKLVQARLPFKRLNPEPKECNEPKRTKGPVAPKCSEPSDQENDQDSSSISHHGPALVNGRGPLDCFMSRRKRSPLRSAPEATIDLTEDSNDSAKQQPAPPIAATCPLSEEKTKTSEGTTEPTIPLTEEETEKDEAEDVDALPLLDITQDSDTEEEEEEEEEEEEQQQEAEVSHGNESVLSTGSTSSASVIASSPEPSKSAPTTPASTSRINAANKVKRRSLKSVQEQEEKQRQRDEKERLKQEAKAAKEKKKEEARKMKEEKEREKKEKKEKDEKERREKKERDEKEKADKLKAKEEQRQMKIEAKLEEKRKKEEEKRLKEEKDRIKAEKAEITRFLQKPKTQLAPKTLASACGKFAPFEIKAHMSLAPLTRVQCEDSVLEDLDRYLAQPDSTLNGLKDWTGHKPRSSGPTRPRHSAQGDCVVITESQKADDGPDRSRYGRMKLLHFHDNYRPAYWGTWSKKSTHISPRCPLRLDKDLLDYEVDSDEEWEEEEPGESLSHSEGDDDDEAGEDDDDDDGFFVPHGYLSEGEGALEDEEGGDPEKQKVRQRMKAREWENELMSKGKVKVLEAVVRGCFWEGEKPLPDFLQPYAVCMLEPLSKDEASTPEQDASRQQRNEKLLTMLLPLLHGNVNSNKVIITEFLEFCRQQTSSPTESLLNTTESIPPRIHVRRIIKENAVYEKRSTFKRCCWYVHADVLARYSQEALPVPCQWSYLTSGANVTRDEHSGSQGNSPTTNSSTTPSNKRKSASSHSITKYMKKCGESEQTEAMETDGFQADTEDDEDDDCIIIGEQSGSSEQDINTSLPQTDRETEPMDTSASETAALALPCPTPATA.

Disordered stretches follow at residues 1-353 (MVVV…EEKD), 423-466 (LNGL…PDRS), 513-579 (DSDE…RQRM), and 749-863 (VTRD…PATA). Residues 42–54 (LNPEPKECNEPKR) show a composition bias toward basic and acidic residues. Phosphothreonine is present on threonine 111. Serine 118 carries the phosphoserine modification. The span at 144-154 (SEGTTEPTIPL) shows a compositional bias: low complexity. Composition is skewed to acidic residues over residues 155-168 (TEEE…EDVD) and 177-196 (QDSD…EQQQ). A compositionally biased stretch (low complexity) spans 205 to 237 (ESVLSTGSTSSASVIASSPEPSKSAPTTPASTS). Basic and acidic residues-rich tracts occupy residues 254-353 (QEQE…EEKD) and 457-466 (QKADDGPDRS). Composition is skewed to acidic residues over residues 513–524 (DSDEEWEEEEPG) and 532–547 (GDDD…DDDG). Residues 569-579 (DPEKQKVRQRM) show a composition bias toward basic and acidic residues. Low complexity predominate over residues 760–771 (NSPTTNSSTTPS). Residues 806-815 (DTEDDEDDDC) show a composition bias toward acidic residues. Residues 821 to 835 (QSGSSEQDINTSLPQ) are compositionally biased toward polar residues. A compositionally biased stretch (low complexity) spans 850 to 863 (TAALALPCPTPATA).

Belongs to the CHAF1A family.

It is found in the nucleus. In terms of biological role, acts as a component of the histone chaperone complex chromatin assembly factor 1 (CAF-1), which assembles histone octamers onto DNA during replication and repair. CAF-1 performs the first step of the nucleosome assembly process, bringing newly synthesized histones H3 and H4 to replicating DNA; histones H2A/H2B can bind to this chromatin precursor subsequent to DNA replication to complete the histone octamer. In Danio rerio (Zebrafish), this protein is Chromatin assembly factor 1 subunit A (chaf1a).